The following is a 167-amino-acid chain: Ribosome maturation factor RimM (167 aa).

The 72-residue stretch at 94–165 (ENEFYYSDII…KIIITPMEGL (72 aa)) folds into the PRC barrel domain.

Belongs to the RimM family. In terms of assembly, binds ribosomal protein uS19.

Its subcellular location is the cytoplasm. Functionally, an accessory protein needed during the final step in the assembly of 30S ribosomal subunit, possibly for assembly of the head region. Essential for efficient processing of 16S rRNA. May be needed both before and after RbfA during the maturation of 16S rRNA. It has affinity for free ribosomal 30S subunits but not for 70S ribosomes. The sequence is that of Ribosome maturation factor RimM from Staphylococcus aureus (strain Mu3 / ATCC 700698).